A 145-amino-acid polypeptide reads, in one-letter code: Sec-independent protein translocase protein TatB (145 aa).

A helical membrane pass occupies residues 1-21; it reads MLDVGMTELLCFAIIAILVLG.

This sequence belongs to the TatB family. The Tat system comprises two distinct complexes: a TatABC complex, containing multiple copies of TatA, TatB and TatC subunits, and a separate TatA complex, containing only TatA subunits. Substrates initially bind to the TatABC complex, which probably triggers association of the separate TatA complex to form the active translocon.

The protein localises to the cell inner membrane. In terms of biological role, part of the twin-arginine translocation (Tat) system that transports large folded proteins containing a characteristic twin-arginine motif in their signal peptide across membranes. Together with TatC, TatB is part of a receptor directly interacting with Tat signal peptides. TatB may form an oligomeric binding site that transiently accommodates folded Tat precursor proteins before their translocation. This is Sec-independent protein translocase protein TatB from Acinetobacter baumannii (strain ATCC 17978 / DSM 105126 / CIP 53.77 / LMG 1025 / NCDC KC755 / 5377).